A 505-amino-acid chain; its full sequence is Activin receptor type-1B (505 aa).

The N-terminal stretch at 1–23 (MAESAGASSFFPLVVLLLAGSGG) is a signal peptide. Topologically, residues 24-126 (SGPRGIQALL…AHPSMWGPVE (103 aa)) are extracellular. N-linked (GlcNAc...) asparagine glycosylation is present at Asn-43. Residues 127–149 (LVGIIAGPVFLLFLIIIIVFLVI) traverse the membrane as a helical segment. The Cytoplasmic segment spans residues 150 to 505 (NYHQRVYHNR…QLSVQEDVKI (356 aa)). The GS domain occupies 177–206 (KTLQDLVYDLSTSGSGSGLPLFVQRTVART). Residues 207 to 497 (IVLQEIIGKG…LRIKKTLSQL (291 aa)) form the Protein kinase domain. ATP is bound by residues 213–221 (IGKGRFGEV) and Lys-234. Asp-335 acts as the Proton acceptor in catalysis. Tyr-380 is subject to Phosphotyrosine.

The protein belongs to the protein kinase superfamily. TKL Ser/Thr protein kinase family. TGFB receptor subfamily. In terms of assembly, forms an activin receptor complex with activin receptor type-2 (ACVR2A or ACVR2B). Part of a complex consisting of MAGI2/ARIP1, ACVR2A, ACVR1B and SMAD3. Interacts with SMAD2 and SMAD3. Interacts with SMAD7. Interacts with FKBP1A. Interacts with IGSF1. Interacts with CRIPTO. Interacts with TDP2. Interacts with TSC22D1/TSC-22. Post-translationally, autophosphorylated. Phosphorylated by activin receptor type-2 (ACVR2A or ACVR2B) in response to activin-binding at serine and threonine residues in the GS domain. Phosphorylation of ACVR1B by activin receptor type-2 regulates association with SMAD7. Ubiquitinated. Level of ubiquitination is regulated by the SMAD7-SMURF1 complex. In terms of processing, ubiquitinated.

It localises to the cell membrane. It carries out the reaction L-threonyl-[receptor-protein] + ATP = O-phospho-L-threonyl-[receptor-protein] + ADP + H(+). The catalysed reaction is L-seryl-[receptor-protein] + ATP = O-phospho-L-seryl-[receptor-protein] + ADP + H(+). With respect to regulation, activin receptor type-2 (ACVR2A or ACVR2B) activates the type-1 receptor through phosphorylation of its regulatory GS domain. Transmembrane serine/threonine kinase activin type-1 receptor forming an activin receptor complex with activin receptor type-2 (ACVR2A or ACVR2B). Transduces the activin signal from the cell surface to the cytoplasm and is thus regulating a many physiological and pathological processes including neuronal differentiation and neuronal survival, hair follicle development and cycling, FSH production by the pituitary gland, wound healing, extracellular matrix production, immunosuppression and carcinogenesis. Activin is also thought to have a paracrine or autocrine role in follicular development in the ovary. Within the receptor complex, type-2 receptors (ACVR2A and/or ACVR2B) act as a primary activin receptors whereas the type-1 receptors like ACVR1B act as downstream transducers of activin signals. Activin binds to type-2 receptor at the plasma membrane and activates its serine-threonine kinase. The activated receptor type-2 then phosphorylates and activates the type-1 receptor such as ACVR1B. Once activated, the type-1 receptor binds and phosphorylates the SMAD proteins SMAD2 and SMAD3, on serine residues of the C-terminal tail. Soon after their association with the activin receptor and subsequent phosphorylation, SMAD2 and SMAD3 are released into the cytoplasm where they interact with the common partner SMAD4. This SMAD complex translocates into the nucleus where it mediates activin-induced transcription. Inhibitory SMAD7, which is recruited to ACVR1B through FKBP1A, can prevent the association of SMAD2 and SMAD3 with the activin receptor complex, thereby blocking the activin signal. Activin signal transduction is also antagonized by the binding to the receptor of inhibin-B via the IGSF1 inhibin coreceptor. ACVR1B also phosphorylates TDP2. In Mus musculus (Mouse), this protein is Activin receptor type-1B (Acvr1b).